The sequence spans 181 residues: Akirin-2 (181 aa).

The interval 18–48 (SPAASPKRRRCAPLSPSGPSPQKYLRLEPSP) is disordered. Positions 23 to 28 (PKRRRC) match the Nuclear localization signal motif. The SYVS motif signature appears at 178-181 (SYVS).

Belongs to the akirin family. As to quaternary structure, homodimer. Interacts with actl6a/baf53a. Interacts with gmnn.

It localises to the nucleus. In terms of biological role, molecular adapter that acts as a bridge between a variety of multiprotein complexes, and which is involved in embryonic development, immunity, myogenesis and brain development. Plays a key role in nuclear protein degradation by promoting import of proteasomes into the nucleus: acts by bridging fully assembled 20S proteasomes with nuclear import receptor ipo9. Involved in both neural precursor maintenance and terminal neural differentiation: bridges gmnn and actl6a/baf53a in neural progenitor cells, antagonizing the activity of gmnn, thereby suppressing sox2 expression. Also required for proper activation of neurod1 and neuronal differentiation. Involved in myogenesis: required for skeletal muscle formation and skeletal development, possibly by regulating expression of muscle differentiation factors. This Xenopus laevis (African clawed frog) protein is Akirin-2.